A 234-amino-acid chain; its full sequence is DNA repair protein RecO (234 aa).

Belongs to the RecO family.

Involved in DNA repair and RecF pathway recombination. This Halorhodospira halophila (strain DSM 244 / SL1) (Ectothiorhodospira halophila (strain DSM 244 / SL1)) protein is DNA repair protein RecO.